Reading from the N-terminus, the 334-residue chain is Heat-inducible transcription repressor HrcA (334 aa).

Belongs to the HrcA family.

Negative regulator of class I heat shock genes (grpE-dnaK-dnaJ and groELS operons). Prevents heat-shock induction of these operons. This chain is Heat-inducible transcription repressor HrcA, found in Albidiferax ferrireducens (strain ATCC BAA-621 / DSM 15236 / T118) (Rhodoferax ferrireducens).